A 235-amino-acid chain; its full sequence is Probable carboxylesterase Os04g0669600 (235 aa).

Catalysis depends on charge relay system residues serine 113, aspartate 167, and histidine 199.

The protein belongs to the AB hydrolase superfamily. AB hydrolase 2 family.

Possesses carboxylesterase activity in vitro. This Oryza sativa subsp. japonica (Rice) protein is Probable carboxylesterase Os04g0669600.